The chain runs to 387 residues: Double C2-like domain-containing protein gamma (387 aa).

C2 domains follow at residues 83–209 (ALGT…DICL) and 243–376 (ERGR…ELWH). Residues aspartate 274, aspartate 280, aspartate 334, aspartate 336, and aspartate 342 each coordinate Ca(2+).

It depends on Ca(2+) as a cofactor.

Its function is as follows. May be involved in regulation of vesicular trafficking. In vitro, does not bind calcium and phospholipids. This chain is Double C2-like domain-containing protein gamma (Doc2g), found in Mus musculus (Mouse).